The following is a 347-amino-acid chain: DNA-directed RNA polymerase subunit alpha (347 aa).

The tract at residues 1-243 (MLFREGTRLI…DQISVFINFD (243 aa)) is alpha N-terminal domain (alpha-NTD). The alpha C-terminal domain (alpha-CTD) stretch occupies residues 255–347 (SGSSDLNDNL…EWKRKQHHEA (93 aa)).

This sequence belongs to the RNA polymerase alpha chain family. As to quaternary structure, homodimer. The RNAP catalytic core consists of 2 alpha, 1 beta, 1 beta' and 1 omega subunit. When a sigma factor is associated with the core the holoenzyme is formed, which can initiate transcription.

It catalyses the reaction RNA(n) + a ribonucleoside 5'-triphosphate = RNA(n+1) + diphosphate. DNA-dependent RNA polymerase catalyzes the transcription of DNA into RNA using the four ribonucleoside triphosphates as substrates. The protein is DNA-directed RNA polymerase subunit alpha of Lawsonia intracellularis (strain PHE/MN1-00).